A 1407-amino-acid polypeptide reads, in one-letter code: Metabotropic glutamate receptor-like protein P (1407 aa).

Residues 1–696 (MKFKKKNIYW…KTIKVTSFVK (696 aa)) lie on the Extracellular side of the membrane. Asparagine 43 and asparagine 58 each carry an N-linked (GlcNAc...) asparagine glycan. PbH1 repeat units follow at residues 93–118 (ISDI…FDGG) and 129–150 (FVNV…FLYN). Residues asparagine 162, asparagine 179, asparagine 182, asparagine 230, asparagine 241, asparagine 270, asparagine 368, asparagine 391, asparagine 464, asparagine 512, asparagine 539, asparagine 544, asparagine 554, asparagine 571, asparagine 627, and asparagine 646 are each glycosylated (N-linked (GlcNAc...) asparagine). A PbH1 3 repeat occupies 254 to 279 (ISNVIFESCEFIGNRANSTGGLSFLT). Residues 452–476 (GYSVYIENCEVKNNTGLFKGCFIDT) form a PbH1 4 repeat. A helical membrane pass occupies residues 697–717 (FLVGTLAAILLIILIISGFIS). The Cytoplasmic segment spans residues 718-731 (LKYRKKRVIRYSNP). A helical transmembrane segment spans residues 732–752 (LFLCIILVGCIIFLITIPVLF). The Extracellular segment spans residues 753–758 (GSTSAT). The helical transmembrane segment at 759–779 (CKIRFPIIVIGSCLVTSSVFI) threads the bilayer. The Cytoplasmic portion of the chain corresponds to 780-806 (KQFRIWRLIKDIQLLRETNVENKYLLK). The chain crosses the membrane as a helical span at residues 807–827 (FISILMVIPIIIVICSFFIFP). Residues 828–853 (THEKYTFNQRDITITHYCSDGSYLAY) are Extracellular-facing. Residues 854–874 (VIIFLVYQMAILLFGCYLVIV) traverse the membrane as a helical segment. Topologically, residues 875 to 890 (CRKFRSIPGTFNEATY) are cytoplasmic. A helical membrane pass occupies residues 891 to 911 (IGILIYNYTVVLIVAIPLAYV). Residues 912-919 (FNKNPLAN) are Extracellular-facing. A helical transmembrane segment spans residues 920-940 (FLIFSISIIVFVLSTIILLFI). Topologically, residues 941 to 1407 (PKFHFLLRKK…LSPINLSKRK (467 aa)) are cytoplasmic. The segment covering 991-1004 (QQRQGNLYNNNSLG) has biased composition (polar residues). Disordered regions lie at residues 991 to 1072 (QQRQ…DPNF), 1084 to 1248 (GKRK…SSIG), 1267 to 1351 (KKVK…NFNE), and 1369 to 1407 (FHQK…SKRK). Residues 1005-1029 (RSISSNTRKRSNNNINNNNNNNSFN) show a composition bias toward low complexity. Over residues 1030–1040 (MTGFSDSSSTI) the composition is skewed to polar residues. The span at 1041–1071 (SNPNLTSFTSSPSSLNSSSDSDSTPDFNDPN) shows a compositional bias: low complexity. Residues 1084-1093 (GKRKSIEKNK) show a composition bias toward basic and acidic residues. Low complexity-rich tracts occupy residues 1099–1147 (PNSP…NTPI), 1154–1246 (SSKT…SDSS), and 1276–1339 (SDST…NNNN). Residues 1315–1344 (NNNNNNNNNNNNNINNNNNNANNNNSDTDD) are a coiled coil.

The protein belongs to the G-protein coupled receptor 3 family. GABA-B receptor subfamily.

It localises to the membrane. The sequence is that of Metabotropic glutamate receptor-like protein P (grlP) from Dictyostelium discoideum (Social amoeba).